Reading from the N-terminus, the 396-residue chain is Phosphoglycerate kinase (396 aa).

Substrate is bound by residues 21–23, Arg-37, 60–63, Arg-121, and Arg-154; these read DFN and HLGR. Residues Lys-205, Gly-296, Glu-327, and 353-356 each bind ATP; that span reads GGDS.

This sequence belongs to the phosphoglycerate kinase family. As to quaternary structure, monomer.

Its subcellular location is the cytoplasm. It catalyses the reaction (2R)-3-phosphoglycerate + ATP = (2R)-3-phospho-glyceroyl phosphate + ADP. The protein operates within carbohydrate degradation; glycolysis; pyruvate from D-glyceraldehyde 3-phosphate: step 2/5. The polypeptide is Phosphoglycerate kinase (Anaeromyxobacter sp. (strain K)).